The primary structure comprises 414 residues: Serine hydroxymethyltransferase (414 aa).

Residues Leu118 and Gly122 to Leu124 contribute to the (6S)-5,6,7,8-tetrahydrofolate site. Residue Lys227 is modified to N6-(pyridoxal phosphate)lysine. Residues Glu240 and Ser350–Phe352 each bind (6S)-5,6,7,8-tetrahydrofolate.

Belongs to the SHMT family. As to quaternary structure, homodimer. Pyridoxal 5'-phosphate is required as a cofactor.

It is found in the cytoplasm. The catalysed reaction is (6R)-5,10-methylene-5,6,7,8-tetrahydrofolate + glycine + H2O = (6S)-5,6,7,8-tetrahydrofolate + L-serine. It functions in the pathway one-carbon metabolism; tetrahydrofolate interconversion. The protein operates within amino-acid biosynthesis; glycine biosynthesis; glycine from L-serine: step 1/1. Functionally, catalyzes the reversible interconversion of serine and glycine with tetrahydrofolate (THF) serving as the one-carbon carrier. This reaction serves as the major source of one-carbon groups required for the biosynthesis of purines, thymidylate, methionine, and other important biomolecules. Also exhibits THF-independent aldolase activity toward beta-hydroxyamino acids, producing glycine and aldehydes, via a retro-aldol mechanism. The polypeptide is Serine hydroxymethyltransferase (Bacillus cereus (strain ZK / E33L)).